Reading from the N-terminus, the 815-residue chain is Calpain-3 (815 aa).

The disordered stretch occupies residues 7 to 36; that stretch reads ASVAPRTAAEPRSPGPVPHPAQSKATEAGG. The 344-residue stretch at 74–417 folds into the Calpain catalytic domain; it reads LYVDPEFPPD…FTKLEICNLT (344 aa). Active-site residues include cysteine 129, histidine 334, and asparagine 358. Residues 418–586 are domain III; it reads ADALQSDKLQ…KRNLSEEVEN (169 aa). A linker region spans residues 587 to 649; that stretch reads TISVDRPVPI…QESEEQQQFR (63 aa). A disordered region spans residues 605 to 646; it reads SNKELGVDQESEEGKGKTSPDKQEQSPQPQPGSSDQESEEQQ. Over residues 616–628 the composition is skewed to basic and acidic residues; that stretch reads EEGKGKTSPDKQE. Residues 629 to 639 are compositionally biased toward low complexity; the sequence is QSPQPQPGSSD. 4 EF-hand domains span residues 643–677, 686–719, 716–751, and 781–815; these read EEQQ…VVNK, FTLE…NKIK, NKIK…AGFH, and VRLE…TMYA. Residues 650 to 815 are domain IV; it reads NIFKQIAGDD…LEWLQLTMYA (166 aa). Residues alanine 656, aspartate 659, glutamate 661, glutamate 666, aspartate 699, aspartate 701, serine 703, lysine 705, glutamate 710, aspartate 729, aspartate 731, serine 733, threonine 735, glutamate 740, aspartate 794, aspartate 796, aspartate 798, and isoleucine 800 each coordinate Ca(2+).

Belongs to the peptidase C2 family. As to quaternary structure, homodimer; via EF-hand domain 4. Interacts with TTN/titin. Interacts with CMYA5; this interaction, which results in CMYA5 proteolysis, may protect CAPN3 from autolysis. Interacts with SIMC1. Interacts with UTP25; the interaction is required for CAPN3 translocation to the nucleolus.

The protein localises to the cytoplasm. It is found in the nucleus. Its subcellular location is the nucleolus. It catalyses the reaction Broad endopeptidase activity.. Its activity is regulated as follows. Activated by micromolar concentrations of calcium and inhibited by calpastatin. Functionally, calcium-regulated non-lysosomal thiol-protease. Proteolytically cleaves CTBP1. Mediates, with UTP25, the proteasome-independent degradation of p53/TP53. This Macaca fascicularis (Crab-eating macaque) protein is Calpain-3 (CAPN3).